A 240-amino-acid polypeptide reads, in one-letter code: Endonuclease NucS 1 (240 aa).

Belongs to the NucS endonuclease family.

The protein resides in the cytoplasm. Its function is as follows. Cleaves both 3' and 5' ssDNA extremities of branched DNA structures. The chain is Endonuclease NucS 1 from Halobacterium salinarum (strain ATCC 700922 / JCM 11081 / NRC-1) (Halobacterium halobium).